We begin with the raw amino-acid sequence, 619 residues long: DNA mismatch repair protein MutL (619 aa).

It belongs to the DNA mismatch repair MutL/HexB family.

In terms of biological role, this protein is involved in the repair of mismatches in DNA. It is required for dam-dependent methyl-directed DNA mismatch repair. May act as a 'molecular matchmaker', a protein that promotes the formation of a stable complex between two or more DNA-binding proteins in an ATP-dependent manner without itself being part of a final effector complex. The sequence is that of DNA mismatch repair protein MutL from Xylella fastidiosa (strain 9a5c).